The primary structure comprises 490 residues: Betaine aldehyde dehydrogenase (490 aa).

NAD(+) contacts are provided by residues K174, E177, and G227 to G232. Catalysis depends on residues E249 and C283. Residue E384 coordinates NAD(+).

The protein belongs to the aldehyde dehydrogenase family. Homodimer.

It carries out the reaction betaine aldehyde + NAD(+) + H2O = glycine betaine + NADH + 2 H(+). It functions in the pathway amine and polyamine biosynthesis; betaine biosynthesis via choline pathway; betaine from betaine aldehyde: step 1/1. With respect to regulation, activity is stimulated by low concentrations of salts and by moderate concentrations of glycine betaine. Highly tolerant to high ionic conditions. In vitro, activity is highly stimulated in the presence of proline. Functionally, involved in the biosynthesis of the osmoprotectant glycine betaine from choline. Catalyzes the oxidation of betaine aldehyde to betaine. Shows specificity for betaine aldehyde as substrate. Can use both NAD(+) and NADP(+), but NAD(+) is strongly preferred. The chain is Betaine aldehyde dehydrogenase from Bacillus subtilis (strain 168).